Here is a 248-residue protein sequence, read N- to C-terminus: MGIQNRVALITGSASGMGKQTALRFAEQGAAVVINDIDAEKVRATVDEFSARGHRVLGAVADIGNKAAVDGMVKQTIDAFGRIDILVNNAGMERAGALRKLSEADWDVTINVNLKGTFLCTQAVHGHMVENKHGRIVNIASRAWLGGAGQTPYSSAKAGVVGMTRALAIELGRAGITVNCVAPGLIHTPMWDELPEKDQQFLLSRQPTGKLGEPDDIANTLLFLADDDSGFVTGQVLYVCGGRSLFAG.

NAD(+) is bound by residues Ser15, Asp36, Asp62, Ile63, Asn89, Tyr153, and Lys157. Tyr153 (proton acceptor) is an active-site residue.

This sequence belongs to the short-chain dehydrogenases/reductases (SDR) family. In terms of assembly, heterotetramer composed of 2 inactive BbsC subunits and 2 active BbsD subunits.

The enzyme catalyses (2S)-[(R)-hydroxy(phenyl)methyl]succinyl-CoA + NAD(+) = (S)-2-benzoylsuccinyl-CoA + NADH + H(+). Its pathway is xenobiotic degradation; toluene degradation. Activity is probably regulated by the inactive BbsC subunit. Involved in an anaerobic toluene degradation pathway. Active subunit that catalyzes the oxidation of 2-(alpha-hydroxybenzyl)succinyl-CoA to 2-benzoylsuccinyl-CoA. In vitro, can catalyze the NADH-dependent reduction of the artificial substrates 2,2-dichloroacetophene and 2,4'-dichloroacetophenone. This chain is (2S)-[(R)-hydroxy(phenyl)methyl]succinyl-CoA dehydrogenase subunit BbsD, found in Thauera aromatica.